Reading from the N-terminus, the 350-residue chain is GDSL esterase/lipase At4g10955 (350 aa).

This sequence belongs to the 'GDSL' lipolytic enzyme family.

This Arabidopsis thaliana (Mouse-ear cress) protein is GDSL esterase/lipase At4g10955.